Consider the following 916-residue polypeptide: DNA gyrase subunit A (916 aa).

Residues 42–544 (LPDVRDGLKP…FGGDIADEDL (503 aa)) form the Topo IIA-type catalytic domain. Catalysis depends on Tyr130, which acts as the O-(5'-phospho-DNA)-tyrosine intermediate. A GyrA-box motif is present at residues 571–577 (QRRGGRG). Residues 739-748 (SDDLEDETAD) are compositionally biased toward acidic residues. Disordered regions lie at residues 739-774 (SDDL…RGMR) and 897-916 (ESEL…EAEN).

Belongs to the type II topoisomerase GyrA/ParC subunit family. In terms of assembly, heterotetramer, composed of two GyrA and two GyrB chains. In the heterotetramer, GyrA contains the active site tyrosine that forms a transient covalent intermediate with DNA, while GyrB binds cofactors and catalyzes ATP hydrolysis.

The protein localises to the cytoplasm. The catalysed reaction is ATP-dependent breakage, passage and rejoining of double-stranded DNA.. Functionally, a type II topoisomerase that negatively supercoils closed circular double-stranded (ds) DNA in an ATP-dependent manner to modulate DNA topology and maintain chromosomes in an underwound state. Negative supercoiling favors strand separation, and DNA replication, transcription, recombination and repair, all of which involve strand separation. Also able to catalyze the interconversion of other topological isomers of dsDNA rings, including catenanes and knotted rings. Type II topoisomerases break and join 2 DNA strands simultaneously in an ATP-dependent manner. In Neisseria gonorrhoeae, this protein is DNA gyrase subunit A.